Reading from the N-terminus, the 391-residue chain is Chorismate synthase (391 aa).

An NADP(+)-binding site is contributed by R48. FMN-binding positions include 126 to 128, G287, 302 to 306, and R329; these read RSS and KPTSS.

The protein belongs to the chorismate synthase family. It depends on FMNH2 as a cofactor.

The catalysed reaction is 5-O-(1-carboxyvinyl)-3-phosphoshikimate = chorismate + phosphate. It participates in metabolic intermediate biosynthesis; chorismate biosynthesis; chorismate from D-erythrose 4-phosphate and phosphoenolpyruvate: step 7/7. Its function is as follows. Catalyzes the anti-1,4-elimination of the C-3 phosphate and the C-6 proR hydrogen from 5-enolpyruvylshikimate-3-phosphate (EPSP) to yield chorismate, which is the branch point compound that serves as the starting substrate for the three terminal pathways of aromatic amino acid biosynthesis. This reaction introduces a second double bond into the aromatic ring system. This chain is Chorismate synthase, found in Sulfolobus acidocaldarius (strain ATCC 33909 / DSM 639 / JCM 8929 / NBRC 15157 / NCIMB 11770).